The following is a 463-amino-acid chain: uncharacterized protein (463 aa).

This is an uncharacterized protein from Lepidoptera (butterflies and moths).